The chain runs to 219 residues: MAFLLHQARFFTTVNHLRDLPPTVQPEIAFAGRSNAGKSTAINVLCNQKRLAFASKTPGRTQHINYFSVGPAAEPVAHLVDLPGYGYAEVPGAAKAHWEQLLSSYLQTRPQLCGMILMMDARRPLTELDRRMIEWFAPTGKPIHSLLTKCDKLTRQESINALRATQKSLDAYRDAGYAGKLTVQLFSALKRTGLDDAHALIESWLRPAAADEDHAAVAE.

The EngB-type G domain occupies 24-207 (VQPEIAFAGR…HALIESWLRP (184 aa)). Residues 32–39 (GRSNAGKS), 59–63 (GRTQH), 81–84 (DLPG), 148–151 (TKCD), and 185–188 (LFSA) each bind GTP. Mg(2+)-binding residues include Ser-39 and Thr-61.

Belongs to the TRAFAC class TrmE-Era-EngA-EngB-Septin-like GTPase superfamily. EngB GTPase family. Requires Mg(2+) as cofactor.

In terms of biological role, necessary for normal cell division and for the maintenance of normal septation. This is Probable GTP-binding protein EngB from Burkholderia thailandensis (strain ATCC 700388 / DSM 13276 / CCUG 48851 / CIP 106301 / E264).